We begin with the raw amino-acid sequence, 204 residues long: MNSQPLRVGIGGPVGSGKTALTLALCRALRGRYELAVVTNDIYTQEDAEFLVRNEALAPERIIGVETGGCPHTAIREDASINLEAVERLNRRFPGLDLILVESGGDNLSATFSPELSDLTLYVIDVSAGDKLPRKGGPGICKSDLLVINKIDLAPLVGASLEVMERDARKMRGERPFVFSNQKTGQGLETIVAFIEKQGMLGVA.

GTP is bound at residue 12–19 (GPVGSGKT).

This sequence belongs to the SIMIBI class G3E GTPase family. UreG subfamily. Homodimer. UreD, UreF and UreG form a complex that acts as a GTP-hydrolysis-dependent molecular chaperone, activating the urease apoprotein by helping to assemble the nickel containing metallocenter of UreC. The UreE protein probably delivers the nickel.

It localises to the cytoplasm. Facilitates the functional incorporation of the urease nickel metallocenter. This process requires GTP hydrolysis, probably effectuated by UreG. The polypeptide is Urease accessory protein UreG (Azotobacter vinelandii (strain DJ / ATCC BAA-1303)).